A 254-amino-acid polypeptide reads, in one-letter code: MLKIADVEFESRLFTGTGKFSNSQVMLEAIRASKSQLVTVAMKRIDFKIGLDDLLTPLRQVGVQLLPNTSGARNAKEAVFAAELAREMLGTRWIKLEIHPDPKYLMPDAIETLEAARILCEKGFIVLPYVHADPVLCRRLEEVGCAAVMPLASPIGSNQGLVTESFLKIIIEQARVPVVIDAGIGAPSQAARAMELGADAVLVNTAIASSASPIVMAECFKEAVQCGRRAFEAGLGRVQTGAVQTSPLTGFLNQ.

Residue lysine 95 is the Schiff-base intermediate with DXP of the active site. Residues glycine 156, 182 to 183, and 204 to 205 contribute to the 1-deoxy-D-xylulose 5-phosphate site; these read AG and NT.

It belongs to the ThiG family. Homotetramer. Forms heterodimers with either ThiH or ThiS.

Its subcellular location is the cytoplasm. The catalysed reaction is [ThiS sulfur-carrier protein]-C-terminal-Gly-aminoethanethioate + 2-iminoacetate + 1-deoxy-D-xylulose 5-phosphate = [ThiS sulfur-carrier protein]-C-terminal Gly-Gly + 2-[(2R,5Z)-2-carboxy-4-methylthiazol-5(2H)-ylidene]ethyl phosphate + 2 H2O + H(+). It participates in cofactor biosynthesis; thiamine diphosphate biosynthesis. Functionally, catalyzes the rearrangement of 1-deoxy-D-xylulose 5-phosphate (DXP) to produce the thiazole phosphate moiety of thiamine. Sulfur is provided by the thiocarboxylate moiety of the carrier protein ThiS. In vitro, sulfur can be provided by H(2)S. The polypeptide is Thiazole synthase (Shewanella sp. (strain W3-18-1)).